An 85-amino-acid chain; its full sequence is U4-theraphotoxin-Hhn1a (85 aa).

The signal sequence occupies residues 1-22 (MKVTLIAILTCAAVLVLHTTAA). The propeptide occupies 23–48 (EELEAESQPMEVGMPDTELAAVDEER). Disulfide bonds link Cys-52/Cys-66, Cys-56/Cys-77, and Cys-71/Cys-82.

It belongs to the neurotoxin 12 (Hwtx-2) family. 02 (Hwtx-2) subfamily. In terms of assembly, monomer. In terms of tissue distribution, expressed by the venom gland.

Its subcellular location is the secreted. Functionally, neurotoxin active on both insects and mammals. The polypeptide is U4-theraphotoxin-Hhn1a (Cyriopagopus hainanus (Chinese bird spider)).